A 411-amino-acid polypeptide reads, in one-letter code: S-inosyl-L-homocysteine hydrolase (411 aa).

Substrate-binding residues include D121 and E146. 147–149 contributes to the NAD(+) binding site; that stretch reads TTT. The substrate site is built by K176 and D180. NAD(+) is bound by residues N181, 210-215, E233, N268, 289-291, and N335; these read GYGWCG and SGH.

This sequence belongs to the adenosylhomocysteinase family. The cofactor is NAD(+).

The protein localises to the cytoplasm. It carries out the reaction S-inosyl-L-homocysteine + H2O = L-homocysteine + inosine. Its pathway is amino-acid biosynthesis; S-adenosyl-L-methionine biosynthesis. In terms of biological role, catalyzes the hydrolysis of S-inosyl-L-homocysteine (SIH) to L-homocysteine (Hcy) and inosine. Likely functions in a S-adenosyl-L-methionine (SAM) recycling pathway from S-adenosyl-L-homocysteine (SAH) produced from SAM-dependent methylation reactions. Can also catalyze the reverse reaction in vitro, i.e. the synthesis of SIH from Hcy and inosine. The sequence is that of S-inosyl-L-homocysteine hydrolase from Methanosarcina acetivorans (strain ATCC 35395 / DSM 2834 / JCM 12185 / C2A).